Here is a 122-residue protein sequence, read N- to C-terminus: ATP synthase epsilon chain (122 aa).

Positions glutamate 97–alanine 112 are enriched in basic and acidic residues. Positions glutamate 97–serine 122 are disordered.

Belongs to the ATPase epsilon chain family. As to quaternary structure, F-type ATPases have 2 components, CF(1) - the catalytic core - and CF(0) - the membrane proton channel. CF(1) has five subunits: alpha(3), beta(3), gamma(1), delta(1), epsilon(1). CF(0) has three main subunits: a, b and c.

It localises to the cell membrane. Produces ATP from ADP in the presence of a proton gradient across the membrane. In Corynebacterium aurimucosum (strain ATCC 700975 / DSM 44827 / CIP 107346 / CN-1) (Corynebacterium nigricans), this protein is ATP synthase epsilon chain.